A 136-amino-acid chain; its full sequence is ATP synthase epsilon chain (136 aa).

The segment at 100 to 120 (QGALEEANRGEDKPNQLKASN) is disordered. Residues 105–114 (EANRGEDKPN) show a composition bias toward basic and acidic residues.

The protein belongs to the ATPase epsilon chain family. As to quaternary structure, F-type ATPases have 2 components, CF(1) - the catalytic core - and CF(0) - the membrane proton channel. CF(1) has five subunits: alpha(3), beta(3), gamma(1), delta(1), epsilon(1). CF(0) has three main subunits: a, b and c.

It is found in the cellular thylakoid membrane. In terms of biological role, produces ATP from ADP in the presence of a proton gradient across the membrane. The chain is ATP synthase epsilon chain (atpC) from Synechocystis sp. (strain ATCC 27184 / PCC 6803 / Kazusa).